The following is a 216-amino-acid chain: Elongation factor Ts (216 aa).

The interval 80-83 (TDFV) is involved in Mg(2+) ion dislocation from EF-Tu.

It belongs to the EF-Ts family.

It is found in the cytoplasm. Functionally, associates with the EF-Tu.GDP complex and induces the exchange of GDP to GTP. It remains bound to the aminoacyl-tRNA.EF-Tu.GTP complex up to the GTP hydrolysis stage on the ribosome. The chain is Elongation factor Ts from Alkaliphilus oremlandii (strain OhILAs) (Clostridium oremlandii (strain OhILAs)).